The sequence spans 400 residues: NADH-quinone oxidoreductase subunit D (400 aa).

It belongs to the complex I 49 kDa subunit family. NDH-1 is composed of 14 different subunits. Subunits NuoB, C, D, E, F, and G constitute the peripheral sector of the complex.

Its subcellular location is the cell inner membrane. It catalyses the reaction a quinone + NADH + 5 H(+)(in) = a quinol + NAD(+) + 4 H(+)(out). In terms of biological role, NDH-1 shuttles electrons from NADH, via FMN and iron-sulfur (Fe-S) centers, to quinones in the respiratory chain. The immediate electron acceptor for the enzyme in this species is believed to be a menaquinone. Couples the redox reaction to proton translocation (for every two electrons transferred, four hydrogen ions are translocated across the cytoplasmic membrane), and thus conserves the redox energy in a proton gradient. This is NADH-quinone oxidoreductase subunit D from Chlorobium phaeovibrioides (strain DSM 265 / 1930) (Prosthecochloris vibrioformis (strain DSM 265)).